Reading from the N-terminus, the 662-residue chain is Calcium-dependent protease (662 aa).

In terms of domain architecture, Peptidase S8 spans 196-529 (QWHLKQTTIG…YGRINALKAV (334 aa)). Residues aspartate 233, histidine 270, and serine 466 each act as charge relay system in the active site. The P/Homo B domain occupies 535-662 (AQPEPVSIFT…IRSLTIELGF (128 aa)).

Belongs to the peptidase S8 family.

The protein resides in the cytoplasm. Functionally, degrades phycobiliproteins in vitro. Has a substrate specificity similar to that of trypsin. This chain is Calcium-dependent protease (prcA), found in Trichormus variabilis (strain ATCC 29413 / PCC 7937) (Anabaena variabilis).